The following is a 613-amino-acid chain: Pesticidal crystal-like protein Cry16Aa (613 aa).

This sequence belongs to the delta endotoxin family.

The protein localises to the secreted. Functionally, toxin active on mosquito larvae of the species Aedes aegypti, Culex pipiens and Anopheles stephensi. In Paraclostridium bifermentans (Clostridium bifermentans), this protein is Pesticidal crystal-like protein Cry16Aa (cry16Aa).